The sequence spans 887 residues: Alanine--tRNA ligase (887 aa).

The Zn(2+) site is built by His573, His577, Cys676, and His680.

Belongs to the class-II aminoacyl-tRNA synthetase family. Zn(2+) serves as cofactor.

Its subcellular location is the cytoplasm. It carries out the reaction tRNA(Ala) + L-alanine + ATP = L-alanyl-tRNA(Ala) + AMP + diphosphate. Its function is as follows. Catalyzes the attachment of alanine to tRNA(Ala) in a two-step reaction: alanine is first activated by ATP to form Ala-AMP and then transferred to the acceptor end of tRNA(Ala). Also edits incorrectly charged Ser-tRNA(Ala) and Gly-tRNA(Ala) via its editing domain. The polypeptide is Alanine--tRNA ligase (Corynebacterium jeikeium (strain K411)).